A 137-amino-acid polypeptide reads, in one-letter code: Acidic phospholipase A2 CC-PLA2-1 (137 aa).

Residues 1-16 (MRTLWIVAVWLMGVEG) form the signal peptide. 7 disulfide bridges follow: Cys42-Cys130, Cys44-Cys60, Cys59-Cys110, Cys65-Cys137, Cys66-Cys103, Cys73-Cys96, and Cys90-Cys101. 3 residues coordinate Ca(2+): Tyr43, Gly45, and Gly47. The active site involves His63. Asp64 contacts Ca(2+). Residue Asp104 is part of the active site.

This sequence belongs to the phospholipase A2 family. Group II subfamily. D49 sub-subfamily. The cofactor is Ca(2+). In terms of processing, glycosylated (2.5%). As to expression, expressed by the venom gland.

It localises to the secreted. The enzyme catalyses a 1,2-diacyl-sn-glycero-3-phosphocholine + H2O = a 1-acyl-sn-glycero-3-phosphocholine + a fatty acid + H(+). Snake venom phospholipase A2 (PLA2) that inhibits blood coagulation and platelet aggregation induced by ADP and arachidonic acid. Inhibits tumor cell adhesion and migration in a dose-dependent manner. Abolishes the attachment of human brain microvascular endothelial cells (HBMEC) to fibrinogen (IC(50)=0.12 uM) and dramatically reduces its adhesion to fibronectin (IC(50)=0.12 uM), whereas no effect is observed on type I collagen, vitronectin or laminin 1. Also blocks the cell migration toward fibronectin and fibrinogen. These effects are not dependent of the catalytic activity, but are mediated by alpha-5/beta-1 (ITGA5/ITGB1) and alpha-v-containing (ITGAV) integrins. Also shows anti-angiogenic activity in chicken chorioallantoix membrane assay. Has a relatively high enzymatic activity. PLA2 catalyzes the calcium-dependent hydrolysis of the 2-acyl groups in 3-sn-phosphoglycerides. This is Acidic phospholipase A2 CC-PLA2-1 from Cerastes cerastes (Horned desert viper).